Consider the following 261-residue polypeptide: Neurovirulence factor ICP34.5 (261 aa).

Positions 1–17 are enriched in basic residues; it reads MSRRRGPRRRGPRRRPR. Positions 1-19 are required for nucleolar localization; that stretch reads MSRRRGPRRRGPRRRPRPG. Disordered stretches follow at residues 1–59, 75–135, and 145–164; these read MSRR…SAPA, DSDD…LALR, and RLSL…APRG. Repeats lie at residues 3 to 7, 8 to 12, 16 to 23, and 24 to 31; these read RRRGP and PRPGAPAV. Residues 3-12 are 2 X 5 AA tandem repeats of R-R-R-G-P; that stretch reads RRRGPRRRGP. Residues 16–31 form a 2 X 8 AA tandem repeats of P-R-P-G-A-P-A-V region; it reads PRPGAPAVPRPGAPAV. Positions 18–32 are enriched in pro residues; it reads PGAPAVPRPGAPAVP. The span at 75–88 shows a compositional bias: acidic residues; sequence DSDDADYAGNDDAE. A compositionally biased stretch (low complexity) spans 101 to 111; it reads APEAPHAAPAA. The Nuclear export signal signature appears at 128 to 137; sequence LPPHLALRLR. A binding to PP1CA region spans residues 163 to 176; that stretch reads RGKVCFSPRVQVRH. Residues 163-176 form an interaction with host PPP1CA region; sequence RGKVCFSPRVQVRH. Residues 178–261 form an important for interferon resistance region; the sequence is VAWETAARLA…AAAGPGRRAV (84 aa). Residues 188 to 206 carry the Bipartite nuclear localization signal motif; the sequence is RRGSWARERADRDRFRRRV. The interval 206–221 is interaction with host EIF2S1/EIF-2ALPHA; that stretch reads VAAAEAVIGPCLEPEA. The disordered stretch occupies residues 223 to 261; the sequence is ARARARARAHEDGGPAEEEEAAAAARGSSAAAGPGRRAV. The span at 244–261 shows a compositional bias: low complexity; sequence AAAARGSSAAAGPGRRAV.

This sequence belongs to the PPP1R15 family. Interacts with host PPP1CA to form a high-molecular-weight complex that dephosphorylates EIF2S1/eIF-2alpha. Interacts with host EIF2S1/eIF-2alpha; this interaction is crucial for the specific dephosphorylation of EIF2S1/eIF-2alpha by PPP1CA.

The protein localises to the host cytoplasm. It localises to the host nucleus. Its subcellular location is the host nucleolus. It is found in the virion. Plays essential roles in viral nuclear egress to mediate capsid transit across the nuclear membrane and also in the inhibition of host immune response and integrated stress response (ISR). Facilitates nuclear egress cooperatively with host C1QBP and protein kinase C/PKC to induce lamin A/C phosphorylation and subsequent reorganization. In turn, lamina disassembles and nuclear egress occurs. Recruits the serine/threonine-protein phosphatase PPP1CA/PP1-alpha to dephosphorylate the translation initiation factor EIF2S1/eIF-2alpha, thereby couteracting the host shutoff of protein synthesis involving double-stranded RNA-dependent protein kinase EIF2AK2/PKR. Also down-modulates the host MHC class II proteins cell surface expression. Acts as a neurovirulence factor that has a profound effect on the growth of the virus in central nervous system tissue, probably through its ability to maintain an environment favorable for viral replication. This chain is Neurovirulence factor ICP34.5 (RL1), found in Human herpesvirus 2 (strain HG52) (HHV-2).